The primary structure comprises 389 residues: Major outer membrane porin (389 aa).

The protein belongs to the chlamydial porin (CP) (TC 1.B.2) family. In terms of assembly, part of a disulfide cross-linked outer membrane complex (COMC) composed of the major outer membrane porin (MOMP), the small cysteine-rich protein (OmcA) and the large cysteine-rich periplasmic protein (OmcB).

The protein localises to the cell outer membrane. In terms of biological role, in elementary bodies (EBs, the infectious stage, which is able to survive outside the host cell) provides the structural integrity of the outer envelope through disulfide cross-links with the small cysteine-rich protein and the large cysteine-rich periplasmic protein. It has been described in publications as the Sarkosyl-insoluble COMC (Chlamydia outer membrane complex), and serves as the functional equivalent of peptidoglycan. Functionally, permits diffusion of specific solutes through the outer membrane. This chain is Major outer membrane porin (ompA), found in Chlamydia pneumoniae (Chlamydophila pneumoniae).